The chain runs to 277 residues: Alpha-ketoglutarate-dependent dioxygenase tstK (277 aa).

Belongs to the asaB hydroxylase/desaturase family.

It carries out the reaction 2-[(1R,8S,14R,15R)-11-hydroxy-14,15-bis[(6E)-oct-6-en-1-yl]-3,5,9-trioxo-4,10-dioxatetracyclo[9.4.0.0(2,6).0(8,12)]pentadeca-2(6),12-dien-8-yl]acetate + 3 2-oxoglutarate + 3 O2 = phomoidride A + 3 succinate + 3 CO2 + H2O. Alpha-ketoglutarate-dependent dioxygenase; part of the gene cluster that mediates the biosynthesis of the antihypercholesterolemic agents phomoidrides which are dimeric anhydrides. Within the pathway, tstK is responsible for the iterative oxidation necessary to convert prephomoidride to phomoidride A. The pathway begins with the highly reducing polyketide synthase tstiA that catalyzes the formation of a C12-fatty acyl-ACP, starting from one acetate and 5 malonate units. The hydrolase tstM is involved in the release of the C12-fatty acyl chain from phiA. The alkylcitrate synthase (ACS) tstJ and the alkylcitrate dehydratase (ACDH) tstI then give rise to decarboxylated monomeric anhydrides by coupling the C12-fatty acyl chain with oxalacetic acid. The cyclase tstC is responsible for the dimerization of the monomeric anhydrides which leads to the production of prephomoidride that contains the characteristic bicyclo[4.3.1]deca-1,6-diene system of phomoidrides. Iterative oxidation catalyzed by the alpha-ketoglutarate-dependent dioxygenase tstK produced then phomoidride A. Finally, the methyltransferase tstE converts phomoidride A to phomoidride B via an acetalization reaction. The phosphatidylethanolamine-binding protein tstB and tstN are not essential for dimerization and their functions have still to be determined. The polypeptide is Alpha-ketoglutarate-dependent dioxygenase tstK (Talaromyces stipitatus (strain ATCC 10500 / CBS 375.48 / QM 6759 / NRRL 1006) (Penicillium stipitatum)).